A 97-amino-acid chain; its full sequence is Putative membrane protein insertion efficiency factor (97 aa).

The protein belongs to the UPF0161 family.

It localises to the cell membrane. Could be involved in insertion of integral membrane proteins into the membrane. The sequence is that of Putative membrane protein insertion efficiency factor from Lactobacillus johnsonii (strain CNCM I-12250 / La1 / NCC 533).